The following is a 427-amino-acid chain: Sperm-associated antigen 1A (427 aa).

The interval 46–113 (QKKGPGYREG…GPGSAGESCN (68 aa)) is disordered. 6 TPR repeats span residues 125–158 (LARLKNQGNMLFKNGQFGDALEKYTQAIDGCIEA), 167–200 (CVLYSNRAACFLKDGNSADCIQDCTRALELHPFS), 202–234 (KPLLRRAMAYESLERYRKAYVDYKTVLQIDISV), 302–335 (FTILKQEGNELVKNSQFQGASEKYSECLAIKPNE), 336–369 (CAIYTNRALCFLKLERFAEAKQDCDSALQMEPKN), and 371–403 (KAFYRRALAHKGLKDYLSASTDLQEVLQLDPNV).

The protein resides in the cytoplasm. The protein localises to the dynein axonemal particle. Functionally, may play a role in the cytoplasmic assembly and/or trafficking of the axonemal dynein arms. The chain is Sperm-associated antigen 1A (spag1a) from Danio rerio (Zebrafish).